Here is a 588-residue protein sequence, read N- to C-terminus: Zinc finger protein 599 (588 aa).

The region spanning 9 to 80 is the KRAB domain; that stretch reads VSFEDVVVTF…KRGLSQSTCA (72 aa). 14 consecutive C2H2-type zinc fingers follow at residues 199–221, 227–249, 255–277, 283–305, 311–333, 339–361, 367–389, 395–417, 423–445, 451–473, 479–501, 507–529, 535–557, and 563–585; these read YTCT…QQIH, YECN…MRLH, YKCI…QRIH, YECK…NMTH, FLCK…MRIH, YECG…NVTH, YECG…KRTH, FECK…MRIH, YECS…NRTH, LECK…MRIH, YVCR…NRIH, FECK…MRTH, and FECN…RKIH.

Belongs to the krueppel C2H2-type zinc-finger protein family.

It localises to the nucleus. In terms of biological role, may be involved in transcriptional regulation. The chain is Zinc finger protein 599 (ZNF599) from Homo sapiens (Human).